The sequence spans 327 residues: MDNVFDYEDIQLIPAKCIVESRSECDTSVTLGGHTFKLPVVPANMQTIIDETLAKKLAENGYFYIMHRFQPEARVNFIQDMHGSGLIASISVGVKEEEYAFIEELAATNLVPEFITIDIAHGHSNAVIRMIQHIKKHLPNSFVIAGNVGTPEAVRELENAGADATKVGIGPGKVCITKIKTGFGTGGWQLAALRWCAKAATKPIIADGGIRTHGDIAKSVRFGASMVMIGSLFAGHEESPGQTIEVEGKKVKEYFGSASEFQKGERKNVEGKKMFVEHKGSIKDTLIEMQQDLQSSISYAGGTKLDAIRNVDYVIVKNSIFNGDKVY.

Cys175 acts as the Thioimidate intermediate in catalysis. Ile204–Val227 contributes to the NADP(+) binding site.

The protein belongs to the IMPDH/GMPR family. GuaC type 2 subfamily.

The catalysed reaction is IMP + NH4(+) + NADP(+) = GMP + NADPH + 2 H(+). Catalyzes the irreversible NADPH-dependent deamination of GMP to IMP. It functions in the conversion of nucleobase, nucleoside and nucleotide derivatives of G to A nucleotides, and in maintaining the intracellular balance of A and G nucleotides. This chain is GMP reductase, found in Lysinibacillus sphaericus (strain C3-41).